The chain runs to 529 residues: Peptide chain release factor 3 (529 aa).

The 270-residue stretch at 11–280 folds into the tr-type G domain; sequence AKRRTFAIIS…GLVEWAPAPM (270 aa). Residues 20–27, 88–92, and 142–145 each bind GTP; these read SHPDAGKT, DTPGH, and NKLD.

It belongs to the TRAFAC class translation factor GTPase superfamily. Classic translation factor GTPase family. PrfC subfamily.

It localises to the cytoplasm. In terms of biological role, increases the formation of ribosomal termination complexes and stimulates activities of RF-1 and RF-2. It binds guanine nucleotides and has strong preference for UGA stop codons. It may interact directly with the ribosome. The stimulation of RF-1 and RF-2 is significantly reduced by GTP and GDP, but not by GMP. This chain is Peptide chain release factor 3, found in Yersinia enterocolitica serotype O:8 / biotype 1B (strain NCTC 13174 / 8081).